The following is a 276-amino-acid chain: Tryptophan synthase alpha chain (276 aa).

Catalysis depends on proton acceptor residues glutamate 49 and aspartate 60.

It belongs to the TrpA family. Tetramer of two alpha and two beta chains.

The catalysed reaction is (1S,2R)-1-C-(indol-3-yl)glycerol 3-phosphate + L-serine = D-glyceraldehyde 3-phosphate + L-tryptophan + H2O. The protein operates within amino-acid biosynthesis; L-tryptophan biosynthesis; L-tryptophan from chorismate: step 5/5. The alpha subunit is responsible for the aldol cleavage of indoleglycerol phosphate to indole and glyceraldehyde 3-phosphate. In Acidiphilium cryptum (strain JF-5), this protein is Tryptophan synthase alpha chain.